The following is a 261-amino-acid chain: Cytochrome c oxidase subunit 3 (261 aa).

Topologically, residues 1-15 are mitochondrial matrix; sequence MTHQTHAYHMVNPSP. A helical transmembrane segment spans residues 16–34; the sequence is WPLTGALSALLMTSGLIMW. At 35-40 the chain is on the mitochondrial intermembrane side; that stretch reads FHFNSV. A helical transmembrane segment spans residues 41 to 66; it reads ALLMLGLTTNMLTMYQWWRDVIREST. At 67-72 the chain is on the mitochondrial matrix side; that stretch reads FQGHHT. A helical transmembrane segment spans residues 73 to 105; the sequence is PNVQKGLRYGMILFIISEVLFFTGFFWAFYHSS. At 106–128 the chain is on the mitochondrial intermembrane side; the sequence is LAPTPELGGCWPPTGIHPLNPLE. Residues 129–152 form a helical membrane-spanning segment; sequence VPLLNTSVLLASGVSITWAHHSLM. Residues 153-155 lie on the Mitochondrial matrix side of the membrane; it reads EGN. The chain crosses the membrane as a helical span at residues 156–183; it reads RNHMLQALFITIALGVYFTLLQASEYYE. Over 184–190 the chain is Mitochondrial intermembrane; it reads APFTISD. Residues 191–223 traverse the membrane as a helical segment; the sequence is GVYGSTFFVATGFHGLHVIIGSTFLIVCFFRQL. The Mitochondrial matrix portion of the chain corresponds to 224–232; it reads KFHFTSSHH. A helical membrane pass occupies residues 233-256; that stretch reads FGFEAAAWYWHFVDVVWLFLYVSI. The Mitochondrial intermembrane portion of the chain corresponds to 257-261; sequence YWWGS.

The protein belongs to the cytochrome c oxidase subunit 3 family. In terms of assembly, component of the cytochrome c oxidase (complex IV, CIV), a multisubunit enzyme composed of 14 subunits. The complex is composed of a catalytic core of 3 subunits MT-CO1, MT-CO2 and MT-CO3, encoded in the mitochondrial DNA, and 11 supernumerary subunits COX4I, COX5A, COX5B, COX6A, COX6B, COX6C, COX7A, COX7B, COX7C, COX8 and NDUFA4, which are encoded in the nuclear genome. The complex exists as a monomer or a dimer and forms supercomplexes (SCs) in the inner mitochondrial membrane with NADH-ubiquinone oxidoreductase (complex I, CI) and ubiquinol-cytochrome c oxidoreductase (cytochrome b-c1 complex, complex III, CIII), resulting in different assemblies (supercomplex SCI(1)III(2)IV(1) and megacomplex MCI(2)III(2)IV(2)).

It localises to the mitochondrion inner membrane. It catalyses the reaction 4 Fe(II)-[cytochrome c] + O2 + 8 H(+)(in) = 4 Fe(III)-[cytochrome c] + 2 H2O + 4 H(+)(out). In terms of biological role, component of the cytochrome c oxidase, the last enzyme in the mitochondrial electron transport chain which drives oxidative phosphorylation. The respiratory chain contains 3 multisubunit complexes succinate dehydrogenase (complex II, CII), ubiquinol-cytochrome c oxidoreductase (cytochrome b-c1 complex, complex III, CIII) and cytochrome c oxidase (complex IV, CIV), that cooperate to transfer electrons derived from NADH and succinate to molecular oxygen, creating an electrochemical gradient over the inner membrane that drives transmembrane transport and the ATP synthase. Cytochrome c oxidase is the component of the respiratory chain that catalyzes the reduction of oxygen to water. Electrons originating from reduced cytochrome c in the intermembrane space (IMS) are transferred via the dinuclear copper A center (CU(A)) of subunit 2 and heme A of subunit 1 to the active site in subunit 1, a binuclear center (BNC) formed by heme A3 and copper B (CU(B)). The BNC reduces molecular oxygen to 2 water molecules using 4 electrons from cytochrome c in the IMS and 4 protons from the mitochondrial matrix. The chain is Cytochrome c oxidase subunit 3 (MT-CO3) from Nanger granti (Grant's gazelle).